The sequence spans 1038 residues: Bone morphogenetic protein receptor type-2 (1038 aa).

The N-terminal stretch at 1-26 is a signal peptide; sequence MTSSLQRPWRVPWLPWTILLVSTAAA. Topologically, residues 27–150 are extracellular; it reads SQNQERLCAF…PPHSFNRDET (124 aa). 5 disulfides stabilise this stretch: cysteine 34-cysteine 66, cysteine 60-cysteine 84, cysteine 94-cysteine 117, cysteine 99-cysteine 116, and cysteine 118-cysteine 123. N-linked (GlcNAc...) asparagine glycosylation is present at asparagine 55. Asparagine 110 carries an N-linked (GlcNAc...) asparagine glycan. Asparagine 126 carries N-linked (GlcNAc...) asparagine glycosylation. A helical transmembrane segment spans residues 151-171; the sequence is IIIALASVSVLAVLIVALCFG. Residues 172–1038 lie on the Cytoplasmic side of the membrane; it reads YRMLTGDRKQ…VSKDIGMNCL (867 aa). Residues 203 to 504 form the Protein kinase domain; it reads LKLLELIGRG…QCAEERMAEL (302 aa). ATP is bound by residues 209–217, lysine 230, and 280–282; these read IGRGRYGAV and EYY. Aspartate 333 functions as the Proton acceptor in the catalytic mechanism. ATP is bound by residues 337-338 and aspartate 351; that span reads RN. Threonine 379 bears the Phosphothreonine mark. Residue serine 586 is modified to Phosphoserine. The interval 593–626 is disordered; that stretch reads QAQARIPSPETSVTSLSTNTTTTNTTGLTPSTGM. Positions 603 to 626 are enriched in low complexity; that stretch reads TSVTSLSTNTTTTNTTGLTPSTGM. A phosphoserine mark is found at serine 680 and serine 681. 2 disordered regions span residues 746–770 and 872–972; these read PKQQ…KEPR and RREQ…EKIK. A compositionally biased stretch (basic and acidic residues) spans 872–896; the sequence is RREQQAGHDEGVLDRLVDRRERPLE. Positions 937–964 are enriched in polar residues; the sequence is RPNSLDLSATNVLDGSSIQIGESTQDGK.

It belongs to the protein kinase superfamily. TKL Ser/Thr protein kinase family. TGFB receptor subfamily. As to quaternary structure, interacts with GDF5. Interacts with BMP4. Interacts with SCUBE3. Interacts with TSC22D1/TSC-22. Interacts with activin A/INHBA. It depends on Mg(2+) as a cofactor. Requires Mn(2+) as cofactor. As to expression, highly expressed in heart and liver.

It localises to the cell membrane. The enzyme catalyses L-threonyl-[receptor-protein] + ATP = O-phospho-L-threonyl-[receptor-protein] + ADP + H(+). It catalyses the reaction L-seryl-[receptor-protein] + ATP = O-phospho-L-seryl-[receptor-protein] + ADP + H(+). Its function is as follows. On ligand binding, forms a receptor complex consisting of two type II and two type I transmembrane serine/threonine kinases. Type II receptors phosphorylate and activate type I receptors which autophosphorylate, then bind and activate SMAD transcriptional regulators. Can also mediate signaling through the activation of the p38MAPK cascade. Binds to BMP7, BMP2 and, less efficiently, BMP4. Binding is weak but enhanced by the presence of type I receptors for BMPs. Mediates induction of adipogenesis by GDF6. Promotes signaling also by binding to activin A/INHBA. The chain is Bone morphogenetic protein receptor type-2 (BMPR2) from Homo sapiens (Human).